Here is a 784-residue protein sequence, read N- to C-terminus: SWI/SNF complex subunit SWI3C homolog (784 aa).

Residues 1–10 (MPRKASSTSD) are compositionally biased toward polar residues. Residues 1-68 (MPRKASSTSD…PEDADDETLA (68 aa)) are disordered. Residues 24–39 (ASPSPSNRSSAAAAAA) are compositionally biased toward low complexity. Residues 43–66 (DDSDSAAVNEDDDSAVPEDADDET) show a composition bias toward acidic residues. In terms of domain architecture, SWIRM spans 185–284 (HVVPKHSDWF…YLASGSVHRG (100 aa)). The ZZ-type; degenerate zinc finger occupies 355–409 (LSESSCSYCLQPLTSLHYQSLKEADIALCSDCFHDARYITGHSSLDFQRIDGDND). Residues cysteine 360, cysteine 363, cysteine 383, and cysteine 386 each coordinate Zn(2+). An SANT domain is found at 413–464 (NDGDSWTDQETLLLLEGIEKYNDNWNNIAEHVGTKSKAQCIYHFIRLPVEDG). 2 disordered regions span residues 667-702 (LASPGNSLPGGSTSTMSSNPMSMSPRPMGVPGSMPQ) and 760-784 (GMPNSVTPNHHQLLRSSSGNNSSVG). A compositionally biased stretch (low complexity) spans 675–695 (PGGSTSTMSSNPMSMSPRPMG).

Interacts with LFR. Interacts with NMCP1.

The protein localises to the nucleus. It is found in the nucleoplasm. Its function is as follows. Component of a multiprotein complex equivalent of the SWI/SNF complex, an ATP-dependent chromatin-remodeling complex, which is required for the positive and negative regulation of gene expression of a large number of genes. It changes chromatin structure by altering DNA-histone contacts within a nucleosome, leading eventually to a change in nucleosome position, thus facilitating or repressing binding of gene-specific transcription factors. May be involved in positive response to drought stress and modulation of root growth through its interaction with NMCP1. This is SWI/SNF complex subunit SWI3C homolog from Oryza sativa subsp. japonica (Rice).